Reading from the N-terminus, the 336-residue chain is F420-dependent glucose-6-phosphate dehydrogenase (336 aa).

Residue aspartate 39 participates in coenzyme F420-(gamma-Glu)n binding. Residue histidine 40 is the Proton donor of the active site. Coenzyme F420-(gamma-Glu)n is bound by residues threonine 76 and 107 to 108 (TG). Glutamate 109 serves as the catalytic Proton acceptor. Coenzyme F420-(gamma-Glu)n is bound by residues asparagine 112, 177-178 (GG), and 180-181 (AV). Residues threonine 195, lysine 198, lysine 259, and arginine 283 each contribute to the substrate site.

It belongs to the F420-dependent glucose-6-phosphate dehydrogenase family. Homodimer.

It carries out the reaction oxidized coenzyme F420-(gamma-L-Glu)(n) + D-glucose 6-phosphate + H(+) = 6-phospho-D-glucono-1,5-lactone + reduced coenzyme F420-(gamma-L-Glu)(n). Catalyzes the coenzyme F420-dependent oxidation of glucose 6-phosphate (G6P) to 6-phosphogluconolactone. Appears to have a role in resistance to oxidative stress, via its consumption of G6P that serves as a source of reducing power to combat oxidative stress in mycobacteria. The chain is F420-dependent glucose-6-phosphate dehydrogenase from Mycobacterium avium (strain 104).